The primary structure comprises 27 residues: WDVNDCIHFCLIGVVGRSYTECHTMCT.

2 disulfides stabilise this stretch: Cys-6–Cys-26 and Cys-10–Cys-22.

In terms of tissue distribution, expressed by the venom duct.

The protein resides in the secreted. This is Conotoxin flf14b from Conus anabathrum floridanus (Florida cone).